A 229-amino-acid chain; its full sequence is Small ribosomal subunit protein uS3 (229 aa).

The KH type-2 domain occupies 17–85 (VKEWIKDEVR…NPQVSVDEVE (69 aa)). A disordered region spans residues 202–229 (LRGESGEDEGDKGDEQGGEAQEAEGAGA). Residues 219 to 229 (GEAQEAEGAGA) show a composition bias toward low complexity.

This sequence belongs to the universal ribosomal protein uS3 family. Part of the 30S ribosomal subunit.

Functionally, binds the lower part of the 30S subunit head. The protein is Small ribosomal subunit protein uS3 of Archaeoglobus fulgidus (strain ATCC 49558 / DSM 4304 / JCM 9628 / NBRC 100126 / VC-16).